Consider the following 124-residue polypeptide: Small ribosomal subunit protein uS12 (124 aa).

D89 is modified (3-methylthioaspartic acid). Residues 101 to 124 (TLDTSGVKDRRQSRSKYGAKAPKE) are disordered.

The protein belongs to the universal ribosomal protein uS12 family. In terms of assembly, part of the 30S ribosomal subunit. Contacts proteins S8 and S17. May interact with IF1 in the 30S initiation complex.

With S4 and S5 plays an important role in translational accuracy. Its function is as follows. Interacts with and stabilizes bases of the 16S rRNA that are involved in tRNA selection in the A site and with the mRNA backbone. Located at the interface of the 30S and 50S subunits, it traverses the body of the 30S subunit contacting proteins on the other side and probably holding the rRNA structure together. The combined cluster of proteins S8, S12 and S17 appears to hold together the shoulder and platform of the 30S subunit. In Synechococcus sp. (strain CC9902), this protein is Small ribosomal subunit protein uS12.